The following is a 309-amino-acid chain: uncharacterized protein (309 aa).

Residues 1–32 constitute a signal peptide (tat-type signal); it reads MTGTAPVSRRQYLGTAGAIIGTTAGCLTGADA.

It belongs to the bacterial solute-binding protein 1 family. WtpA subfamily. Post-translationally, predicted to be exported by the Tat system. The position of the signal peptide cleavage has not been experimentally proven.

This is an uncharacterized protein from Halobacterium salinarum (strain ATCC 700922 / JCM 11081 / NRC-1) (Halobacterium halobium).